A 469-amino-acid polypeptide reads, in one-letter code: 3-isopropylmalate dehydratase large subunit (469 aa).

The [4Fe-4S] cluster site is built by cysteine 350, cysteine 410, and cysteine 413.

This sequence belongs to the aconitase/IPM isomerase family. LeuC type 1 subfamily. As to quaternary structure, heterodimer of LeuC and LeuD. Requires [4Fe-4S] cluster as cofactor.

It catalyses the reaction (2R,3S)-3-isopropylmalate = (2S)-2-isopropylmalate. The protein operates within amino-acid biosynthesis; L-leucine biosynthesis; L-leucine from 3-methyl-2-oxobutanoate: step 2/4. Functionally, catalyzes the isomerization between 2-isopropylmalate and 3-isopropylmalate, via the formation of 2-isopropylmaleate. This is 3-isopropylmalate dehydratase large subunit from Chelativorans sp. (strain BNC1).